Here is a 432-residue protein sequence, read N- to C-terminus: Mannan endo-1,4-beta-mannosidase 1 (432 aa).

A signal peptide spans 1-28 (MRLLGAHRAALLVLACVVVVVIHGLGEA). Trp-93 and Asn-209 together coordinate substrate. Glu-210 serves as the catalytic Proton donor. Tyr-289 provides a ligand contact to substrate. Glu-329 (nucleophile) is an active-site residue. A substrate-binding site is contributed by Trp-371.

This sequence belongs to the glycosyl hydrolase 5 (cellulase A) family. Ubiquitous.

It is found in the secreted. The catalysed reaction is Random hydrolysis of (1-&gt;4)-beta-D-mannosidic linkages in mannans, galactomannans and glucomannans.. The protein is Mannan endo-1,4-beta-mannosidase 1 (MAN1) of Oryza sativa subsp. japonica (Rice).